The sequence spans 329 residues: Glutamine synthetase (329 aa).

One can recognise a GS beta-grasp domain in the interval 4-86; sequence YKLEYIWLDA…VMCEVMMPDA (83 aa). A GS catalytic domain is found at 89 to 329; sequence PHASNTRATV…GDPYQMLLSS (241 aa). Mg(2+)-binding residues include E109 and E111. E167 serves as a coordination point for ATP. Mg(2+) contacts are provided by E172 and E179. An L-glutamate-binding site is contributed by E278.

It belongs to the glutamine synthetase family. In terms of assembly, homooctamer and homotetramer. The cofactor is Mg(2+).

The protein resides in the cytoplasm. The enzyme catalyses L-glutamate + NH4(+) + ATP = L-glutamine + ADP + phosphate + H(+). Its function is as follows. Catalyzes the ATP-dependent biosynthesis of glutamine from glutamate and ammonia. The chain is Glutamine synthetase from Rhizobium meliloti (Ensifer meliloti).